We begin with the raw amino-acid sequence, 243 residues long: MHGAAVTPPSTVSPTPVPTQSAPLSVALVSHRCPDPCEVTGFHSRRVHEPCEIRPSDDVVLFYGPRMGQELRRFSTEANGGLPPFAVLATCLDWDDVCLALDSGAIGYLLEIEDPDLLAAALHCISHGHTILAPQIAEHARVTSCPGGALRQTAAVARPDTSGSATGRTGDSSPSLALSPQEREIMTRLASGLSVREIAVEMRLAEKTVRNYLSHIYGKLGVRSRSQALLRWLGHPGGETAHH.

Residues 154-179 (AAVARPDTSGSATGRTGDSSPSLALS) are disordered. Positions 161–178 (TSGSATGRTGDSSPSLAL) are enriched in polar residues. An HTH luxR-type domain is found at 171-236 (DSSPSLALSP…QALLRWLGHP (66 aa)). The segment at residues 195–214 (VREIAVEMRLAEKTVRNYLS) is a DNA-binding region (H-T-H motif).

The protein operates within antibiotic biosynthesis. Functionally, probable DNA-binding protein that contributes to the control of expression of the biosynthesis operon of the 16-membered macrolide antibiotics FD-891 and FD-892. Might be a member of a two-component regulatory system; the putative sensor kinase gene is unknown. The polypeptide is Probable HTH-type transcriptional regulator GfsR (Streptomyces halstedii).